The chain runs to 164 residues: ATP synthase subunit b (164 aa).

The helical transmembrane segment at 7–25 threads the bilayer; that stretch reads SFWLAVSFIIFVYLIYRPA.

The protein belongs to the ATPase B chain family. F-type ATPases have 2 components, F(1) - the catalytic core - and F(0) - the membrane proton channel. F(1) has five subunits: alpha(3), beta(3), gamma(1), delta(1), epsilon(1). F(0) has three main subunits: a(1), b(2) and c(10-14). The alpha and beta chains form an alternating ring which encloses part of the gamma chain. F(1) is attached to F(0) by a central stalk formed by the gamma and epsilon chains, while a peripheral stalk is formed by the delta and b chains.

Its subcellular location is the cell inner membrane. Functionally, f(1)F(0) ATP synthase produces ATP from ADP in the presence of a proton or sodium gradient. F-type ATPases consist of two structural domains, F(1) containing the extramembraneous catalytic core and F(0) containing the membrane proton channel, linked together by a central stalk and a peripheral stalk. During catalysis, ATP synthesis in the catalytic domain of F(1) is coupled via a rotary mechanism of the central stalk subunits to proton translocation. In terms of biological role, component of the F(0) channel, it forms part of the peripheral stalk, linking F(1) to F(0). This Rickettsia felis (strain ATCC VR-1525 / URRWXCal2) (Rickettsia azadi) protein is ATP synthase subunit b.